The primary structure comprises 500 residues: MPSIFTHQWDTPVYKGSTSINTGLFINGEFVDGVKNTTIDVVNPANGKLITKISEATEADIDIAVEAAHKAFETTWGLNCSGSKRGDMLYKLAQLMEKNIDDLSAIEALDNGKTFLWAKSVDLSLSISTIKHYAGWADKNFGQVIETDEKKLTYSRHEPIGVVGQIIPWNFPLLMLAWKIGPALATGNCIVLKPSEFTPLSALRMCALIQEAGFPPGVVNVVTGYGSTTGQAISSHMKIDKVAFTGSTLVGRKVMEAAAKSNLKNVTLELGGKSPVVIFDDADLEQSVNWTAHGLFWNHGQACCAGTRIFVQEGIYDKFLQKFTDKIKEIKLGDPFGLGIDQGPQVSQIQYDRIMSYIESGRAEGATVHVGGERHGNEGYFIQPTIFTDTTPDMKIVKEEIFGPVGAVIKFKDGKEVIKQANDSNYGLAAAVFSQDINKAIETAHAFKAGTAWVNCANTIDAGVPFGGYKQSGIGRELGEYALHNYTNVKAVHVNLNWKM.

G246–G251 is an NAD(+) binding site. Catalysis depends on E269, which acts as the Proton acceptor. The active-site Nucleophile is the C303.

This sequence belongs to the aldehyde dehydrogenase family.

It carries out the reaction an aldehyde + NAD(+) + H2O = a carboxylate + NADH + 2 H(+). It participates in alcohol metabolism; ethanol degradation; acetate from ethanol: step 2/2. The protein is Aldehyde dehydrogenase (aldA) of Agaricus bisporus (White button mushroom).